Reading from the N-terminus, the 168-residue chain is Ribosome maturation factor RimM (168 aa).

In terms of domain architecture, PRC barrel spans 96 to 168; it reads EGDYYWTDLI…IIVVEWDADF (73 aa).

This sequence belongs to the RimM family. As to quaternary structure, binds ribosomal protein uS19.

The protein resides in the cytoplasm. In terms of biological role, an accessory protein needed during the final step in the assembly of 30S ribosomal subunit, possibly for assembly of the head region. Essential for efficient processing of 16S rRNA. May be needed both before and after RbfA during the maturation of 16S rRNA. It has affinity for free ribosomal 30S subunits but not for 70S ribosomes. In Coxiella burnetii (strain Dugway 5J108-111), this protein is Ribosome maturation factor RimM.